The chain runs to 120 residues: NAD(P)H-quinone oxidoreductase subunit 3, chloroplastic (120 aa).

Helical transmembrane passes span 9–29 (IFWA…LISG), 64–84 (MFAL…PWAM), and 88–108 (VLGV…IVGS).

Belongs to the complex I subunit 3 family. In terms of assembly, NDH is composed of at least 16 different subunits, 5 of which are encoded in the nucleus.

It is found in the plastid. The protein resides in the chloroplast thylakoid membrane. The catalysed reaction is a plastoquinone + NADH + (n+1) H(+)(in) = a plastoquinol + NAD(+) + n H(+)(out). The enzyme catalyses a plastoquinone + NADPH + (n+1) H(+)(in) = a plastoquinol + NADP(+) + n H(+)(out). Its function is as follows. NDH shuttles electrons from NAD(P)H:plastoquinone, via FMN and iron-sulfur (Fe-S) centers, to quinones in the photosynthetic chain and possibly in a chloroplast respiratory chain. The immediate electron acceptor for the enzyme in this species is believed to be plastoquinone. Couples the redox reaction to proton translocation, and thus conserves the redox energy in a proton gradient. This chain is NAD(P)H-quinone oxidoreductase subunit 3, chloroplastic, found in Liriodendron tulipifera (Tuliptree).